The primary structure comprises 600 residues: Glutamine--fructose-6-phosphate aminotransferase [isomerizing] (600 aa).

The Nucleophile; for GATase activity role is filled by C2. Residues 2–217 (CGIVGFIGEQ…DKEIVIVTKE (216 aa)) enclose the Glutamine amidotransferase type-2 domain. 2 SIS domains span residues 283-422 (IRNA…AKGE) and 452-590 (LAKQ…VDKP). The active-site For Fru-6P isomerization activity is K595.

As to quaternary structure, homodimer.

It localises to the cytoplasm. The catalysed reaction is D-fructose 6-phosphate + L-glutamine = D-glucosamine 6-phosphate + L-glutamate. In terms of biological role, catalyzes the first step in hexosamine metabolism, converting fructose-6P into glucosamine-6P using glutamine as a nitrogen source. The chain is Glutamine--fructose-6-phosphate aminotransferase [isomerizing] from Bacillus cereus (strain ATCC 10987 / NRS 248).